Here is a 136-residue protein sequence, read N- to C-terminus: MPIQLEIVTAERVVLSEEVDMVSAPSVEGRVGILPRHEPLLTVLQPGELHYVKNGVSMPYAISGGFMEVLPNRVTILADTAERADEIDETRAEQARLQAEQAMRDRQSTEDLARAEIALRRATVRLQVAKLRRNRQ.

The protein belongs to the ATPase epsilon chain family. F-type ATPases have 2 components, CF(1) - the catalytic core - and CF(0) - the membrane proton channel. CF(1) has five subunits: alpha(3), beta(3), gamma(1), delta(1), epsilon(1). CF(0) has three main subunits: a, b and c.

The protein resides in the cell membrane. Its function is as follows. Produces ATP from ADP in the presence of a proton gradient across the membrane. The protein is ATP synthase epsilon chain of Herpetosiphon aurantiacus (strain ATCC 23779 / DSM 785 / 114-95).